Consider the following 700-residue polypeptide: mRNA cap guanine-N(7) methyltransferase (700 aa).

2 stretches are compositionally biased toward basic and acidic residues: residues 1–10 and 52–67; these read MVYDPIRDCD and EPPR…ESHR. 2 disordered regions span residues 1-263 and 277-392; these read MVYD…SVLR and AHAN…ERNK. Residues 113 to 128 are compositionally biased toward polar residues; sequence RSPSMSLSPRSQNQSL. 2 stretches are compositionally biased toward low complexity: residues 129–144 and 220–241; these read PYPS…SAHP and PQPT…TPHH. Residues 429 to 700 enclose the mRNA cap 0 methyltransferase domain; that stretch reads SPIIGLKKFN…LYMGFAFEKM (272 aa). 438-439 is an mRNA binding site; sequence NN. S-adenosyl-L-methionine contacts are provided by lysine 442, glycine 461, aspartate 483, aspartate 512, glutamine 538, and tyrosine 543.

Belongs to the class I-like SAM-binding methyltransferase superfamily. mRNA cap 0 methyltransferase family.

The protein localises to the nucleus. The catalysed reaction is a 5'-end (5'-triphosphoguanosine)-ribonucleoside in mRNA + S-adenosyl-L-methionine = a 5'-end (N(7)-methyl 5'-triphosphoguanosine)-ribonucleoside in mRNA + S-adenosyl-L-homocysteine. Functionally, responsible for methylating the 5'-cap structure of mRNAs. In Cryptococcus neoformans var. neoformans serotype D (strain B-3501A) (Filobasidiella neoformans), this protein is mRNA cap guanine-N(7) methyltransferase (ABD1).